The following is a 207-amino-acid chain: MTKVAVLKQDGSQAAELELNDAVFAIEPNNAVITDAVLMQRASMRQGTHAVKNRSAVSGGGRKPWKQKGTGRARAGSIREPQFRGGGIVFGPTPRSYAYRINRKAYQLALKSVLSQKVAEGKLVVVDALSFEAPKTQDFKKVLANLSVDTKTLVVVDEDNENAILSARNLTNVQVMTTKGINVLDVVNADKLVIVQSSIEEIQGGLA.

The disordered stretch occupies residues 48 to 75; the sequence is THAVKNRSAVSGGGRKPWKQKGTGRARA.

Belongs to the universal ribosomal protein uL4 family. As to quaternary structure, part of the 50S ribosomal subunit.

One of the primary rRNA binding proteins, this protein initially binds near the 5'-end of the 23S rRNA. It is important during the early stages of 50S assembly. It makes multiple contacts with different domains of the 23S rRNA in the assembled 50S subunit and ribosome. Functionally, forms part of the polypeptide exit tunnel. The polypeptide is Large ribosomal subunit protein uL4 (Leuconostoc citreum (strain KM20)).